The primary structure comprises 370 residues: Ferrochelatase (370 aa).

The Fe cation site is built by His210 and Glu291.

This sequence belongs to the ferrochelatase family.

It localises to the cytoplasm. It carries out the reaction heme b + 2 H(+) = protoporphyrin IX + Fe(2+). It functions in the pathway porphyrin-containing compound metabolism; protoheme biosynthesis; protoheme from protoporphyrin-IX: step 1/1. Catalyzes the ferrous insertion into protoporphyrin IX. This chain is Ferrochelatase, found in Marinobacter nauticus (strain ATCC 700491 / DSM 11845 / VT8) (Marinobacter aquaeolei).